We begin with the raw amino-acid sequence, 346 residues long: Prepilin peptidase EppA (346 aa).

10 helical membrane-spanning segments follow: residues 1–21, 31–51, 56–76, 77–97, 101–121, 128–148, 149–169, 182–202, 206–226, and 321–341; these read MFGF…LILT, IIPH…GYYF, AITS…GMGG, GDVK…IYFV, ISIL…TKIL, IIPS…ITEI, YSIG…IFIS, LGYI…AYFV, VLIS…VIYA, and PFVP…MGVI.

Belongs to the peptidase A24 family.

The protein localises to the cell membrane. Its function is as follows. Peptidase that processes the N-terminus of prepilins. Specifically cleaves proteins with a class III (type IV pilin-like) signal sequence, such as the major structural pilin EpdE and the minor pilins EpdA, EpdC and EpdD. Is not able to cleave the preflagellin subunit FlaB2. In Methanococcus maripaludis (strain DSM 14266 / JCM 13030 / NBRC 101832 / S2 / LL), this protein is Prepilin peptidase EppA.